The chain runs to 140 residues: MNIYLISKVFIKYHLFQNILKSYLLNFLVRLMALGLDRNMEGVLCYLLFWISGLIFLLLEREDDFIRFHAMQSFITFLSLNLIAIIVSAIPIIGWVASTLINIAIIILWIVGMIKAYNGERYKFPVFGDIAERYYREFLK.

3 consecutive transmembrane segments (helical) span residues 40–60 (MEGV…LLLE), 70–90 (AMQS…VSAI), and 92–112 (IIGW…WIVG).

This sequence belongs to the UPF0132 family.

It localises to the cell membrane. In Methanocaldococcus jannaschii (strain ATCC 43067 / DSM 2661 / JAL-1 / JCM 10045 / NBRC 100440) (Methanococcus jannaschii), this protein is UPF0132 membrane protein MJ1527.